The chain runs to 224 residues: Orotate phosphoribosyltransferase (224 aa).

Residues lysine 26, 73-74 (YK), arginine 100, lysine 101, lysine 104, histidine 106, and 127-135 (EDVTTAGTS) each bind 5-phospho-alpha-D-ribose 1-diphosphate. The orotate site is built by threonine 131 and arginine 160.

This sequence belongs to the purine/pyrimidine phosphoribosyltransferase family. PyrE subfamily. In terms of assembly, homodimer. It depends on Mg(2+) as a cofactor.

It carries out the reaction orotidine 5'-phosphate + diphosphate = orotate + 5-phospho-alpha-D-ribose 1-diphosphate. Its pathway is pyrimidine metabolism; UMP biosynthesis via de novo pathway; UMP from orotate: step 1/2. In terms of biological role, catalyzes the transfer of a ribosyl phosphate group from 5-phosphoribose 1-diphosphate to orotate, leading to the formation of orotidine monophosphate (OMP). The sequence is that of Orotate phosphoribosyltransferase from Clostridium acetobutylicum (strain ATCC 824 / DSM 792 / JCM 1419 / IAM 19013 / LMG 5710 / NBRC 13948 / NRRL B-527 / VKM B-1787 / 2291 / W).